The sequence spans 717 residues: Cell division cycle protein 27 homolog A (717 aa).

Over residues 198–208 (TEHIPGENQQD) the composition is skewed to polar residues. 3 disordered regions span residues 198–217 (TEHI…QPGD), 282–315 (LSAE…KDSH), and 342–374 (SKEA…SPDR). Basic residues predominate over residues 293–304 (RRSARIAARKKN). A compositionally biased stretch (polar residues) spans 342–356 (SKEATTSGQSVSDIG). 7 TPR repeats span residues 421-454 (HWVL…YPYA), 489-522 (PESW…NERF), 524-556 (YAHT…DTRH), 557-590 (YNAW…NPRS), 592-624 (VIMC…DAKN), 625-658 (PLPK…APQE), and 659-692 (SSVH…SPSP).

The protein belongs to the APC3/CDC27 family. In terms of assembly, the APC/C is composed of at least 10 subunits. Interacts with APC2 and APC10.

It is found in the nucleus. It functions in the pathway protein modification; protein ubiquitination. Its function is as follows. Component of the anaphase promoting complex/cyclosome (APC/C), a cell cycle-regulated E3 ubiquitin-protein ligase complex that controls progression through mitosis and the G1 phase of the cell cycle. The APC/C complex controls several key steps in the cell cycle by mediating ubiquitination and subsequent degradation of target proteins such as cyclins. The APC/C complex is required for the female gametophyte development and is involved in several aspect of development by controlling cell division and cell elongation. Involved in the control of endoreduplication. Functionally redundant with CDC27B in the control of gametophyte development. This Arabidopsis thaliana (Mouse-ear cress) protein is Cell division cycle protein 27 homolog A (CDC27A).